A 270-amino-acid polypeptide reads, in one-letter code: 3-methyl-2-oxobutanoate hydroxymethyltransferase (270 aa).

Positions 43 and 82 each coordinate Mg(2+). 3-methyl-2-oxobutanoate is bound by residues 43-44 (DS), D82, and K112. Residue E114 participates in Mg(2+) binding. Residue E179 is the Proton acceptor of the active site.

This sequence belongs to the PanB family. Homodecamer; pentamer of dimers. Mg(2+) is required as a cofactor.

The protein resides in the cytoplasm. It catalyses the reaction 3-methyl-2-oxobutanoate + (6R)-5,10-methylene-5,6,7,8-tetrahydrofolate + H2O = 2-dehydropantoate + (6S)-5,6,7,8-tetrahydrofolate. It functions in the pathway cofactor biosynthesis; (R)-pantothenate biosynthesis; (R)-pantoate from 3-methyl-2-oxobutanoate: step 1/2. Functionally, catalyzes the reversible reaction in which hydroxymethyl group from 5,10-methylenetetrahydrofolate is transferred onto alpha-ketoisovalerate to form ketopantoate. The sequence is that of 3-methyl-2-oxobutanoate hydroxymethyltransferase from Oceanobacillus iheyensis (strain DSM 14371 / CIP 107618 / JCM 11309 / KCTC 3954 / HTE831).